Consider the following 316-residue polypeptide: uncharacterized protein (316 aa).

Residues 1-34 (MATKRKIGDGYSSSDDNQPKRERSEGGEDQQLVP) form a disordered region. Positions 17 to 26 (NQPKRERSEG) are enriched in basic and acidic residues.

This is an uncharacterized protein from Lepidoptera (butterflies and moths).